The chain runs to 141 residues: Hemoglobin subunit alpha (141 aa).

The Globin domain maps to 1–141 (VLSPADKTNI…VSTVLVSKYR (141 aa)). Residue Ser-3 is modified to Phosphoserine. An N6-succinyllysine modification is found at Lys-7. A Phosphothreonine modification is found at Thr-8. The residue at position 11 (Lys-11) is an N6-succinyllysine. Lys-16 carries the post-translational modification N6-acetyllysine; alternate. The residue at position 16 (Lys-16) is an N6-succinyllysine; alternate. Tyr-24 bears the Phosphotyrosine mark. At Ser-35 the chain carries Phosphoserine. At Lys-40 the chain carries N6-succinyllysine. Phosphoserine is present on Ser-49. His-58 provides a ligand contact to O2. Position 87 (His-87) interacts with heme b. Ser-102 carries the phosphoserine modification. Thr-108 is modified (phosphothreonine). Residues Ser-124 and Ser-131 each carry the phosphoserine modification. The residue at position 134 (Thr-134) is a Phosphothreonine. Ser-138 carries the post-translational modification Phosphoserine.

It belongs to the globin family. Heterotetramer of two alpha chains and two beta chains. Red blood cells.

Functionally, involved in oxygen transport from the lung to the various peripheral tissues. Its function is as follows. Hemopressin acts as an antagonist peptide of the cannabinoid receptor CNR1. Hemopressin-binding efficiently blocks cannabinoid receptor CNR1 and subsequent signaling. In Myotis velifer (Mouse-eared bat), this protein is Hemoglobin subunit alpha (HBA).